The sequence spans 146 residues: Pre-mRNA-splicing factor cwf14 (146 aa).

This sequence belongs to the BUD31 (G10) family. As to quaternary structure, belongs to the 40S cdc5-associated complex (or cwf complex), a spliceosome sub-complex reminiscent of a late-stage spliceosome composed of the U2, U5 and U6 snRNAs and at least brr2, cdc5, cwf2/prp3, cwf3/syf1, cwf4/syf3, cwf5/ecm2, spp42/cwf6, cwf7/spf27, cwf8, cwf9, cwf10, cwf11, cwf12, prp45/cwf13, cwf14, cwf15, cwf16, cwf17, cwf18, cwf19, cwf20, cwf21, cwf22, cwf23, cwf24, cwf25, cwf26, cyp7/cwf27, cwf28, cwf29/ist3, lea1, msl1, prp5/cwf1, prp10, prp12/sap130, prp17, prp22, sap61, sap62, sap114, sap145, slu7, smb1, smd1, smd3, smf1, smg1 and syf2.

Its subcellular location is the nucleus. Involved in mRNA splicing where it associates with cdc5 and the other cwf proteins as part of the spliceosome. In Schizosaccharomyces pombe (strain 972 / ATCC 24843) (Fission yeast), this protein is Pre-mRNA-splicing factor cwf14 (cwf14).